We begin with the raw amino-acid sequence, 142 residues long: Large ribosomal subunit protein uL13 (142 aa).

Belongs to the universal ribosomal protein uL13 family. As to quaternary structure, part of the 50S ribosomal subunit.

Its function is as follows. This protein is one of the early assembly proteins of the 50S ribosomal subunit, although it is not seen to bind rRNA by itself. It is important during the early stages of 50S assembly. This chain is Large ribosomal subunit protein uL13, found in Citrobacter koseri (strain ATCC BAA-895 / CDC 4225-83 / SGSC4696).